We begin with the raw amino-acid sequence, 199 residues long: dCTP deaminase, dUMP-forming (199 aa).

Residues 101–106 (KSSLGR), Asp119, 127–129 (TLE), Gln148, Tyr162, and Gln174 each bind dCTP. Catalysis depends on Glu129, which acts as the Proton donor/acceptor. Residues 163–199 (GSAAAGSKYQGQRGPTPSRSYLNFPLPSDAVDAVESR) form a disordered region. The segment covering 171–183 (YQGQRGPTPSRSY) has biased composition (polar residues).

The protein belongs to the dCTP deaminase family. In terms of assembly, homotrimer.

The enzyme catalyses dCTP + 2 H2O = dUMP + NH4(+) + diphosphate. It participates in pyrimidine metabolism; dUMP biosynthesis; dUMP from dCTP: step 1/1. In terms of biological role, bifunctional enzyme that catalyzes both the deamination of dCTP to dUTP and the hydrolysis of dUTP to dUMP without releasing the toxic dUTP intermediate. In Nocardia farcinica (strain IFM 10152), this protein is dCTP deaminase, dUMP-forming.